A 218-amino-acid polypeptide reads, in one-letter code: Adenylate kinase (218 aa).

10 to 15 (GAGKGT) is a binding site for ATP. Residues 30 to 59 (STGNMLRAAVKAGTPLGLEAKKVMDAGGLV) form an NMP region. Residues Thr-31, Arg-36, 57–59 (GLV), 85–88 (GFPR), and Gln-92 each bind AMP. The segment at 122 to 159 (GRRVHPASGRSYHVRFNPPKAEGVDDVTGEPLVQRDDD) is LID. Residues Arg-123 and 132 to 133 (SY) contribute to the ATP site. Positions 156 and 167 each coordinate AMP. An ATP-binding site is contributed by Gly-203.

Belongs to the adenylate kinase family. As to quaternary structure, monomer.

It is found in the cytoplasm. It carries out the reaction AMP + ATP = 2 ADP. It functions in the pathway purine metabolism; AMP biosynthesis via salvage pathway; AMP from ADP: step 1/1. Its function is as follows. Catalyzes the reversible transfer of the terminal phosphate group between ATP and AMP. Plays an important role in cellular energy homeostasis and in adenine nucleotide metabolism. The chain is Adenylate kinase from Bordetella parapertussis (strain 12822 / ATCC BAA-587 / NCTC 13253).